The sequence spans 330 residues: DNA-directed RNA polymerase subunit alpha (330 aa).

The segment at 1–232 (MAILAFQKPE…SHFSLFAENK (232 aa)) is alpha N-terminal domain (alpha-NTD). Positions 248 to 330 (EDSLHMRQLL…DISKYKLDKD (83 aa)) are alpha C-terminal domain (alpha-CTD).

This sequence belongs to the RNA polymerase alpha chain family. As to quaternary structure, homodimer. The RNAP catalytic core consists of 2 alpha, 1 beta, 1 beta' and 1 omega subunit. When a sigma factor is associated with the core the holoenzyme is formed, which can initiate transcription.

The enzyme catalyses RNA(n) + a ribonucleoside 5'-triphosphate = RNA(n+1) + diphosphate. Its function is as follows. DNA-dependent RNA polymerase catalyzes the transcription of DNA into RNA using the four ribonucleoside triphosphates as substrates. The chain is DNA-directed RNA polymerase subunit alpha from Porphyromonas gingivalis (strain ATCC BAA-308 / W83).